A 382-amino-acid chain; its full sequence is 3-dehydroquinate synthase (382 aa).

Residues 81–86 (EGEISK), 115–119 (GVVGD), 139–140 (TS), lysine 152, and lysine 161 each bind NAD(+). Residues glutamate 194, histidine 256, and histidine 274 each coordinate Zn(2+).

Belongs to the sugar phosphate cyclases superfamily. Dehydroquinate synthase family. Requires NAD(+) as cofactor. Co(2+) serves as cofactor. The cofactor is Zn(2+).

Its subcellular location is the cytoplasm. The catalysed reaction is 7-phospho-2-dehydro-3-deoxy-D-arabino-heptonate = 3-dehydroquinate + phosphate. Its pathway is metabolic intermediate biosynthesis; chorismate biosynthesis; chorismate from D-erythrose 4-phosphate and phosphoenolpyruvate: step 2/7. In terms of biological role, catalyzes the conversion of 3-deoxy-D-arabino-heptulosonate 7-phosphate (DAHP) to dehydroquinate (DHQ). This Bradyrhizobium diazoefficiens (strain JCM 10833 / BCRC 13528 / IAM 13628 / NBRC 14792 / USDA 110) protein is 3-dehydroquinate synthase.